We begin with the raw amino-acid sequence, 780 residues long: Ribonucleoside-diphosphate reductase large subunit (780 aa).

Residues threonine 177, 192 to 193 (SC), glycine 223, 393 to 397 (NLCAE), and 595 to 599 (PTVGS) contribute to the substrate site. A disulfide bridge connects residues cysteine 193 and cysteine 409. Asparagine 393 (proton acceptor) is an active-site residue. Cysteine 395 functions as the Cysteine radical intermediate in the catalytic mechanism. Glutamate 397 serves as the catalytic Proton acceptor.

The protein belongs to the ribonucleoside diphosphate reductase large chain family. As to quaternary structure, heterotetramer composed of a homodimer of the large subunit (R1) and a homodimer of the small subunit (R2). Larger multisubunit protein complex are also active, composed of (R1)n(R2)n.

It catalyses the reaction a 2'-deoxyribonucleoside 5'-diphosphate + [thioredoxin]-disulfide + H2O = a ribonucleoside 5'-diphosphate + [thioredoxin]-dithiol. Ribonucleoside-diphosphate reductase holoenzyme provides the precursors necessary for viral DNA synthesis. Allows virus growth in non-dividing cells, as well as reactivation from latency in infected hosts. Catalyzes the biosynthesis of deoxyribonucleotides from the corresponding ribonucleotides. The sequence is that of Ribonucleoside-diphosphate reductase large subunit from Connochaetes taurinus (Blue wildebeest).